We begin with the raw amino-acid sequence, 59 residues long: Large ribosomal subunit protein uL30 (59 aa).

The protein belongs to the universal ribosomal protein uL30 family. As to quaternary structure, part of the 50S ribosomal subunit.

The polypeptide is Large ribosomal subunit protein uL30 (Desulfatibacillum aliphaticivorans).